A 545-amino-acid polypeptide reads, in one-letter code: Glucose-6-phosphate isomerase (545 aa).

Glutamate 351 acts as the Proton donor in catalysis. Residues histidine 382 and lysine 510 contribute to the active site.

It belongs to the GPI family.

It localises to the cytoplasm. It carries out the reaction alpha-D-glucose 6-phosphate = beta-D-fructose 6-phosphate. It participates in carbohydrate biosynthesis; gluconeogenesis. Its pathway is carbohydrate degradation; glycolysis; D-glyceraldehyde 3-phosphate and glycerone phosphate from D-glucose: step 2/4. Its function is as follows. Catalyzes the reversible isomerization of glucose-6-phosphate to fructose-6-phosphate. The chain is Glucose-6-phosphate isomerase from Helicobacter pylori (strain ATCC 700392 / 26695) (Campylobacter pylori).